Here is a 543-residue protein sequence, read N- to C-terminus: MLIKSQRLTLFSPLLSKTRRIPVNSHQTLVAESVITRRTLGAITATPSFHKNPVVIRRRIKLERVTRNCVRIDREIDEEEEEEEKERGDLVKQSIWEQMKEIVKFTGPAMGMWICGPLMSLIDTVVIGQGSSIELAALGPGTVLCDHMSYVFMFLSVATSNMVATSLAKQDKKEAQHQISVLLFIGLVCGLMMLLLTRLFGPWAVTAFTRGKNIEIVPAANKYIQIRGLAWPFILVGLVAQSASLGMKNSWGPLKALAAATIINGLGDTILCLFLGQGIAGAAWATTASQIVSAYMMMDSLNKEGYNAYSFAIPSPQELWKISALAAPVFISIFSKIAFYSFIIYCATSMGTHVLAAHQVMAQTYRMCNVWGEPLSQTAQSFMPEMLYGANRNLPKARTLLKSLMIIGATLGLVLGVIGTAVPGLFPGVYTHDKVIISEMHRLLIPFFMALSALPMTVSLEGTLLAGRDLKFVSSVMSSSFIIGCLTLMFVTRSGYGLLGCWFVLVGFQWGRFGLYLRRLLSPGGILNSDGPSPYTVEKIKSI.

The transit peptide at 1-30 (MLIKSQRLTLFSPLLSKTRRIPVNSHQTLV) directs the protein to the chloroplast. Residues 55–94 (VIRRRIKLERVTRNCVRIDREIDEEEEEEEKERGDLVKQS) adopt a coiled-coil conformation. 12 helical membrane passes run 107–127 (GPAM…TVVI), 135–155 (LAAL…FMFL), 181–201 (VLLF…RLFG), 228–248 (GLAW…LGMK), 256–276 (ALAA…LFLG), 278–298 (GIAG…YMMM), 319–339 (LWKI…KIAF), 342–362 (FIIY…QVMA), 406–426 (IIGA…PGLF), 443–463 (LLIP…LEGT), 472–492 (FVSS…MFVT), and 497–517 (GLLG…GLYL).

It belongs to the multi antimicrobial extrusion (MATE) (TC 2.A.66.1) family. In terms of tissue distribution, preferentially expressed in the epidermal cells.

The protein resides in the plastid. It is found in the chloroplast membrane. Functionally, functions as a multidrug and toxin extrusion transporter in the export of salicylic acid (SA) from the chloroplast to the cytoplasm. Plays an essential function in plant defense via the pathogen-induced salicylic acid (SA) accumulation. Also acts as a key component of the Age-related resistance (ARR) pathway. The sequence is that of Protein DETOXIFICATION 47, chloroplastic from Arabidopsis thaliana (Mouse-ear cress).